Reading from the N-terminus, the 114-residue chain is Small ribosomal subunit protein eS25 (114 aa).

Residues 1–33 (MAPKKDKAPPPSSKPAKSGGKQKKKKWSKGKQK) are disordered. The span at 20-30 (GKQKKKKWSKG) shows a compositional bias: basic residues.

It belongs to the eukaryotic ribosomal protein eS25 family.

In Amaranthus cruentus (Purple amaranth), this protein is Small ribosomal subunit protein eS25 (RPS25).